Here is a 196-residue protein sequence, read N- to C-terminus: Adenylate kinase (196 aa).

Position 9–17 (9–17 (GIPGVGKST)) interacts with ATP.

The protein belongs to the archaeal adenylate kinase family.

It localises to the cytoplasm. It catalyses the reaction AMP + ATP = 2 ADP. In Thermococcus onnurineus (strain NA1), this protein is Adenylate kinase.